A 71-amino-acid polypeptide reads, in one-letter code: VKRPMNAFMVWSQNERRKIMDQWPDMHNAEISKRLGRRWQLLQDSEKIPFVKEASVRLKHMADYPDYKYRP.

Residues 1 to 68 constitute a DNA-binding region (HMG box); it reads VKRPMNAFMV…KHMADYPDYK (68 aa).

Its subcellular location is the nucleus. The protein is SRY-related protein LG28 of Eublepharis macularius (Leopard gecko).